We begin with the raw amino-acid sequence, 339 residues long: Protein H339R (339 aa).

The protein belongs to the asfivirus H339R family. As to quaternary structure, interacts with host NACA (alpha chain of nascent polypeptide-associated complex).

It is found in the host cytoplasm. The protein resides in the host nucleus. This chain is Protein H339R, found in African swine fever virus (isolate Tick/Malawi/Lil 20-1/1983) (ASFV).